We begin with the raw amino-acid sequence, 583 residues long: Ribosomal lysine N-methyltransferase 1 (583 aa).

The region spanning 22 to 274 is the SET domain; sequence EELKFLYTDL…QSRELSNNYG (253 aa). Residue Tyr273 coordinates S-adenosyl-L-methionine. Coiled coils occupy residues 378 to 407 and 433 to 459; these read KAEEEDLHDLRARLQGIQMLRNALQSKLNS and KGQKQILKEALTRLKKLEKTMLSENKH.

This sequence belongs to the class V-like SAM-binding methyltransferase superfamily. RKM1 family.

Its subcellular location is the cytoplasm. The protein localises to the nucleus. S-adenosyl-L-methionine-dependent protein-lysine N-methyltransferase that monomethylates ribosomal protein S18 (RPS18A and RPS18B) at 'Lys-48' and dimethylates ribosomal protein L23 (RPL23A and RPL23B) at 'Lys-106' and 'Lys-110'. The protein is Ribosomal lysine N-methyltransferase 1 of Saccharomyces cerevisiae (strain ATCC 204508 / S288c) (Baker's yeast).